Reading from the N-terminus, the 371-residue chain is Queuine tRNA-ribosyltransferase (371 aa).

The Proton acceptor role is filled by D90. Substrate contacts are provided by residues 90-94 (DSGGF), D144, Q188, and G215. The interval 246 to 252 (GVGTPED) is RNA binding. The active-site Nucleophile is D265. Residues 270 to 274 (TRNAR) are RNA binding; important for wobble base 34 recognition. Zn(2+) is bound by residues C303, C305, C308, and H334.

It belongs to the queuine tRNA-ribosyltransferase family. As to quaternary structure, homodimer. Within each dimer, one monomer is responsible for RNA recognition and catalysis, while the other monomer binds to the replacement base PreQ1. Zn(2+) is required as a cofactor.

It carries out the reaction 7-aminomethyl-7-carbaguanine + guanosine(34) in tRNA = 7-aminomethyl-7-carbaguanosine(34) in tRNA + guanine. Its pathway is tRNA modification; tRNA-queuosine biosynthesis. In terms of biological role, catalyzes the base-exchange of a guanine (G) residue with the queuine precursor 7-aminomethyl-7-deazaguanine (PreQ1) at position 34 (anticodon wobble position) in tRNAs with GU(N) anticodons (tRNA-Asp, -Asn, -His and -Tyr). Catalysis occurs through a double-displacement mechanism. The nucleophile active site attacks the C1' of nucleotide 34 to detach the guanine base from the RNA, forming a covalent enzyme-RNA intermediate. The proton acceptor active site deprotonates the incoming PreQ1, allowing a nucleophilic attack on the C1' of the ribose to form the product. After dissociation, two additional enzymatic reactions on the tRNA convert PreQ1 to queuine (Q), resulting in the hypermodified nucleoside queuosine (7-(((4,5-cis-dihydroxy-2-cyclopenten-1-yl)amino)methyl)-7-deazaguanosine). The protein is Queuine tRNA-ribosyltransferase of Neisseria meningitidis serogroup C / serotype 2a (strain ATCC 700532 / DSM 15464 / FAM18).